We begin with the raw amino-acid sequence, 258 residues long: 6-carboxyhexanoate--CoA ligase (258 aa).

The protein belongs to the BioW family. As to quaternary structure, homodimer. The cofactor is Mg(2+).

The catalysed reaction is heptanedioate + ATP + CoA = 6-carboxyhexanoyl-CoA + AMP + diphosphate. Its pathway is metabolic intermediate metabolism; pimeloyl-CoA biosynthesis; pimeloyl-CoA from pimelate: step 1/1. Its function is as follows. Catalyzes the transformation of pimelate into pimeloyl-CoA with concomitant hydrolysis of ATP to AMP. This is 6-carboxyhexanoate--CoA ligase from Bacillus spizizenii (strain ATCC 23059 / NRRL B-14472 / W23) (Bacillus subtilis subsp. spizizenii).